Consider the following 348-residue polypeptide: tRNA pseudouridine synthase D (348 aa).

Phenylalanine 26 serves as a coordination point for substrate. Aspartate 79 serves as the catalytic Nucleophile. Asparagine 128 provides a ligand contact to substrate. The TRUD domain maps to 154-302 (GVPNYFGSQR…VDPARRALLL (149 aa)). Residue phenylalanine 328 participates in substrate binding.

It belongs to the pseudouridine synthase TruD family.

The catalysed reaction is uridine(13) in tRNA = pseudouridine(13) in tRNA. Functionally, responsible for synthesis of pseudouridine from uracil-13 in transfer RNAs. This is tRNA pseudouridine synthase D from Serratia proteamaculans (strain 568).